A 119-amino-acid polypeptide reads, in one-letter code: Large ribosomal subunit protein bL19 (119 aa).

It belongs to the bacterial ribosomal protein bL19 family.

Functionally, this protein is located at the 30S-50S ribosomal subunit interface and may play a role in the structure and function of the aminoacyl-tRNA binding site. The sequence is that of Large ribosomal subunit protein bL19 from Pelobacter propionicus (strain DSM 2379 / NBRC 103807 / OttBd1).